A 216-amino-acid chain; its full sequence is Large ribosomal subunit protein uL1 (216 aa).

The protein belongs to the universal ribosomal protein uL1 family.

This Oryza sativa subsp. indica (Rice) protein is Large ribosomal subunit protein uL1.